The sequence spans 99 residues: NADH-quinone oxidoreductase subunit K (99 aa).

The next 3 membrane-spanning stretches (helical) occupy residues 3–23 (PDNYLHLSALLFTIGAAGVLL), 28–48 (IVVFMCVELMLNAANLAFVAF), and 59–79 (VVAFFTMVVAACEVVIGLAII).

The protein belongs to the complex I subunit 4L family. NDH-1 is composed of 14 different subunits. Subunits NuoA, H, J, K, L, M, N constitute the membrane sector of the complex.

It localises to the cell membrane. It carries out the reaction a quinone + NADH + 5 H(+)(in) = a quinol + NAD(+) + 4 H(+)(out). Its function is as follows. NDH-1 shuttles electrons from NADH, via FMN and iron-sulfur (Fe-S) centers, to quinones in the respiratory chain. The immediate electron acceptor for the enzyme in this species is believed to be a menaquinone. Couples the redox reaction to proton translocation (for every two electrons transferred, four hydrogen ions are translocated across the cytoplasmic membrane), and thus conserves the redox energy in a proton gradient. This is NADH-quinone oxidoreductase subunit K from Mycobacterium sp. (strain KMS).